The chain runs to 263 residues: 4-hydroxy-tetrahydrodipicolinate reductase (263 aa).

NAD(+)-binding positions include 8-13 (GASGRM), Asp34, 99-101 (GTT), and 125-128 (SPNY). The active-site Proton donor/acceptor is His157. A (S)-2,3,4,5-tetrahydrodipicolinate-binding site is contributed by His158. Catalysis depends on Lys161, which acts as the Proton donor. 167–168 (GT) contributes to the (S)-2,3,4,5-tetrahydrodipicolinate binding site.

The protein belongs to the DapB family.

It localises to the cytoplasm. The catalysed reaction is (S)-2,3,4,5-tetrahydrodipicolinate + NAD(+) + H2O = (2S,4S)-4-hydroxy-2,3,4,5-tetrahydrodipicolinate + NADH + H(+). It carries out the reaction (S)-2,3,4,5-tetrahydrodipicolinate + NADP(+) + H2O = (2S,4S)-4-hydroxy-2,3,4,5-tetrahydrodipicolinate + NADPH + H(+). It functions in the pathway amino-acid biosynthesis; L-lysine biosynthesis via DAP pathway; (S)-tetrahydrodipicolinate from L-aspartate: step 4/4. Functionally, catalyzes the conversion of 4-hydroxy-tetrahydrodipicolinate (HTPA) to tetrahydrodipicolinate. This chain is 4-hydroxy-tetrahydrodipicolinate reductase, found in Methanococcoides burtonii (strain DSM 6242 / NBRC 107633 / OCM 468 / ACE-M).